Here is a 211-residue protein sequence, read N- to C-terminus: Protein CHLORORESPIRATORY REDUCTION 41, chloroplastic (211 aa).

The transit peptide at 1-38 (MASTSTLLLPSLSSKNLHIAVPIRTNSFVRRTTKFSTK) directs the protein to the chloroplast. Residues 136 to 163 (AKAGEIVAERAREEAEVLRDEGKVEERM) are a coiled coil.

In terms of assembly, biogenesis factor component of the plastidial NDH subcomplex A.

It localises to the plastid. It is found in the chloroplast. Its subcellular location is the chloroplast stroma. Its function is as follows. Required for both formation and activity of the chloroplast NAD(P)H dehydrogenase (NDH) complex of the photosynthetic electron transport chain. Functions in assembly or stabilization of the NDH complex; probably involved, together with NdhO and NdhH, in the formation of an NDH subcomplex A assembly intermediate (NAI500). In Arabidopsis thaliana (Mouse-ear cress), this protein is Protein CHLORORESPIRATORY REDUCTION 41, chloroplastic.